The chain runs to 851 residues: DNA mismatch repair protein MutS (851 aa).

602–609 (GPNMSGKS) is a binding site for ATP.

Belongs to the DNA mismatch repair MutS family.

In terms of biological role, this protein is involved in the repair of mismatches in DNA. It is possible that it carries out the mismatch recognition step. This protein has a weak ATPase activity. This chain is DNA mismatch repair protein MutS, found in Streptococcus pyogenes serotype M18 (strain MGAS8232).